The sequence spans 245 residues: 1-(5-phosphoribosyl)-5-[(5-phosphoribosylamino)methylideneamino] imidazole-4-carboxamide isomerase (245 aa).

The Proton acceptor role is filled by Asp-7. The active-site Proton donor is Asp-129.

The protein belongs to the HisA/HisF family.

The protein resides in the cytoplasm. It carries out the reaction 1-(5-phospho-beta-D-ribosyl)-5-[(5-phospho-beta-D-ribosylamino)methylideneamino]imidazole-4-carboxamide = 5-[(5-phospho-1-deoxy-D-ribulos-1-ylimino)methylamino]-1-(5-phospho-beta-D-ribosyl)imidazole-4-carboxamide. The protein operates within amino-acid biosynthesis; L-histidine biosynthesis; L-histidine from 5-phospho-alpha-D-ribose 1-diphosphate: step 4/9. This Salmonella agona (strain SL483) protein is 1-(5-phosphoribosyl)-5-[(5-phosphoribosylamino)methylideneamino] imidazole-4-carboxamide isomerase.